The sequence spans 254 residues: Protein odd-skipped-related 2 (254 aa).

3 consecutive C2H2-type zinc fingers follow at residues Phe124–His146, Tyr152–His174, and Phe180–His202.

The protein belongs to the Odd C2H2-type zinc-finger protein family.

The protein resides in the nucleus. Its function is as follows. May function as transcription regulator. Required for morphogenesis and function of the digestive tract. This is Protein odd-skipped-related 2 from Caenorhabditis elegans.